A 468-amino-acid polypeptide reads, in one-letter code: MEQPQTENPAPSKATSAETVESENHEALSGPEKHPQDKDGADADGAAGEQEPGDQTLPPAQDGENLECPPPEASSSPPGPACGTSPKVETAEVCSRPQELPQSPRIQQPELDFYCVKWIPWKGERTPIITQSTNGPCPLLAIMNILFLQWKVKLPPQKEVITSDELLTHLGNCLLSIKPQEKSEGLQLNFQQNVDDAMTVLPKLATGLDVNVRFTGVSDFEYTPECSIFDLLGIPLYHGWLVDPQSPEAVSAVGKLSYNQLVEKIITCKHSSDSNLVTEGLVAEQFLETTAAQLTYHGLCELTAAATEDELSVFFRNNHFSTMTKHKSHLYLLVTDQGFLQEEQVVWESLHNVDGDSCFCDSDFHLSHSLGKSHGAEGGGGSPEKQLQVDQDYLIALSLQQQQQPQGTLGLSDLELAQQLQQEEYQQQQAVQPVRTRAPSPQGRGATSGRPAGERRQRSKTESDCVLL.

Polar residues predominate over residues 1–19 (MEQPQTENPAPSKATSAET). Residues 1 to 105 (MEQPQTENPA…RPQELPQSPR (105 aa)) are disordered. Residues 22-41 (SENHEALSGPEKHPQDKDGA) show a composition bias toward basic and acidic residues. A compositionally biased stretch (low complexity) spans 43–54 (ADGAAGEQEPGD). Residues 68–80 (CPPPEASSSPPGP) are compositionally biased toward pro residues. Position 103 is a phosphoserine (Ser-103). The active-site Nucleophile is the Cys-137. His-319 acts as the Proton acceptor in catalysis. The ubiquitin-binding domain (UBD) stretch occupies residues 388–427 (QVDQDYLIALSLQQQQQPQGTLGLSDLELAQQLQQEEYQQ). The segment covering 423-432 (EEYQQQQAVQ) has biased composition (low complexity). The interval 423 to 468 (EEYQQQQAVQPVRTRAPSPQGRGATSGRPAGERRQRSKTESDCVLL) is disordered. Ser-440 is subject to Phosphoserine. The segment covering 452-468 (AGERRQRSKTESDCVLL) has biased composition (basic and acidic residues).

Belongs to the MINDY deubiquitinase family. FAM63 subfamily.

The enzyme catalyses Thiol-dependent hydrolysis of ester, thioester, amide, peptide and isopeptide bonds formed by the C-terminal Gly of ubiquitin (a 76-residue protein attached to proteins as an intracellular targeting signal).. Its function is as follows. Hydrolase that can specifically remove 'Lys-48'-linked conjugated ubiquitin from proteins. Has exodeubiquitinase activity and has a preference for long polyubiquitin chains. May play a regulatory role at the level of protein turnover. This chain is Ubiquitin carboxyl-terminal hydrolase MINDY-1 (Mindy1), found in Mus musculus (Mouse).